Reading from the N-terminus, the 462-residue chain is DIMBOA UDP-glucosyltransferase BX9 (462 aa).

The active-site Proton acceptor is His24. His24 contributes to the an anthocyanidin binding site. Asp115 (charge relay) is an active-site residue. UDP-alpha-D-glucose is bound by residues Thr137, Ala336, Gln338, His353, Trp356, Asn357, Ser358, and Glu361. Gly376 provides a ligand contact to an anthocyanidin. UDP-alpha-D-glucose-binding residues include Asp377 and Gln378.

It belongs to the UDP-glycosyltransferase family. Mg(2+) serves as cofactor. Requires Ca(2+) as cofactor. Expressed at the same levels in roots and shoots.

It carries out the reaction DIMBOA + UDP-alpha-D-glucose = DIMBOA beta-D-glucoside + UDP + H(+). The catalysed reaction is DIBOA + UDP-alpha-D-glucose = DIBOA beta-D-glucoside + UDP + H(+). In terms of biological role, glucosyltransferase involved in the last step of benzoxazinoid glucoside biosynthesis. Catalyzes the glucosylation of hydroxamic acids utilizing UDP-glucose as glucose doner, reducing the toxicity of these natural insecticides for storage. Can use DIMBOA and DIBOA as substrates, HMBOA (2-hydroxy-7-methoxy-2H-1,4-benzoxazin-3(4H)-one) and HBOA (2-hydroxy-2H-1,4-benzoxazin-3(4H)-one) with a lower efficiency, but not indole acetic acid or quercitin. This chain is DIMBOA UDP-glucosyltransferase BX9 (BX9), found in Zea mays (Maize).